The primary structure comprises 317 residues: Metaxin-1 (317 aa).

Glycyl lysine isopeptide (Lys-Gly) (interchain with G-Cter in ubiquitin) cross-links involve residues Lys-38, Lys-41, and Lys-78. Residues 164–184 traverse the membrane as a helical segment; it reads EELEKELYQEAQECLTLLSQR.

The protein belongs to the metaxin family. In terms of assembly, interacts with MTX2/metaxin-2. Associates with the mitochondrial contact site and cristae organizing system (MICOS) complex, composed of at least MICOS10/MIC10, CHCHD3/MIC19, CHCHD6/MIC25, APOOL/MIC27, IMMT/MIC60, APOO/MIC23/MIC26 and QIL1/MIC13. This complex was also known under the names MINOS or MitOS complex. The MICOS complex associates with mitochondrial outer membrane proteins SAMM50, MTX1 and MTX2 (together described as components of the mitochondrial outer membrane sorting assembly machinery (SAM) complex) and DNAJC11, mitochondrial inner membrane protein TMEM11 and with HSPA9. The MICOS and SAM complexes together with DNAJC11 are part of a large protein complex spanning both membranes termed the mitochondrial intermembrane space bridging (MIB) complex. Interacts with ARMC1. Ubiquitinated by PRKN during mitophagy, leading to its degradation and enhancement of mitophagy. Deubiquitinated by USP30.

It is found in the mitochondrion outer membrane. In terms of biological role, involved in transport of proteins into the mitochondrion. Essential for embryonic development. In Bos taurus (Bovine), this protein is Metaxin-1 (MTX1).